The following is a 113-amino-acid chain: UPF0122 protein Lreu_1156 (113 aa).

The protein belongs to the UPF0122 family.

Its function is as follows. Might take part in the signal recognition particle (SRP) pathway. This is inferred from the conservation of its genetic proximity to ftsY/ffh. May be a regulatory protein. The chain is UPF0122 protein Lreu_1156 from Limosilactobacillus reuteri (strain DSM 20016) (Lactobacillus reuteri).